The following is a 371-amino-acid chain: Photosynthetic reaction center cytochrome c subunit (371 aa).

Heme is bound by residues methionine 114, cysteine 127, cysteine 130, histidine 131, methionine 153, histidine 167, cysteine 178, cysteine 181, histidine 182, methionine 267, cysteine 278, cysteine 281, histidine 282, cysteine 339, cysteine 342, and histidine 343.

As to quaternary structure, component of the photosynthetic reaction center composed of protein subunits L (PufL), M (PufM), H (PuhA) and cytochrome C (PufC). The reaction center interacts with light-harvesting antenna complex LH1. In terms of processing, binds 4 heme groups per subunit.

Its subcellular location is the cellular chromatophore membrane. The reaction center of purple bacteria contains a tightly bound cytochrome molecule which re-reduces the photo oxidized primary electron donor. The chain is Photosynthetic reaction center cytochrome c subunit (pufC) from Roseobacter denitrificans (strain ATCC 33942 / OCh 114) (Erythrobacter sp. (strain OCh 114)).